We begin with the raw amino-acid sequence, 256 residues long: Phosphoribosylaminoimidazole-succinocarboxamide synthase (256 aa).

The interval 234-256 is disordered; sequence KPQKPAAAKKKAPVSKKTVKRTR. Over residues 240–256 the composition is skewed to basic residues; that stretch reads AAKKKAPVSKKTVKRTR.

Belongs to the SAICAR synthetase family.

It carries out the reaction 5-amino-1-(5-phospho-D-ribosyl)imidazole-4-carboxylate + L-aspartate + ATP = (2S)-2-[5-amino-1-(5-phospho-beta-D-ribosyl)imidazole-4-carboxamido]succinate + ADP + phosphate + 2 H(+). The protein operates within purine metabolism; IMP biosynthesis via de novo pathway; 5-amino-1-(5-phospho-D-ribosyl)imidazole-4-carboxamide from 5-amino-1-(5-phospho-D-ribosyl)imidazole-4-carboxylate: step 1/2. The chain is Phosphoribosylaminoimidazole-succinocarboxamide synthase from Methanoregula boonei (strain DSM 21154 / JCM 14090 / 6A8).